The sequence spans 97 residues: uncharacterized protein (97 aa).

This is an uncharacterized protein from Salmonella typhi.